The sequence spans 315 residues: Ribosomal RNA small subunit methyltransferase H (315 aa).

The disordered stretch occupies residues 1–21 (MNVVNVVPMHLPPPPPRPRGE). S-adenosyl-L-methionine contacts are provided by residues 51 to 53 (GGH), aspartate 69, phenylalanine 96, aspartate 117, and glutamine 124. The disordered stretch occupies residues 281 to 315 (KKPVTAGDDEVEGNPRARSAKLRAARRVGGAEALA).

Belongs to the methyltransferase superfamily. RsmH family.

It is found in the cytoplasm. It carries out the reaction cytidine(1402) in 16S rRNA + S-adenosyl-L-methionine = N(4)-methylcytidine(1402) in 16S rRNA + S-adenosyl-L-homocysteine + H(+). Its function is as follows. Specifically methylates the N4 position of cytidine in position 1402 (C1402) of 16S rRNA. This is Ribosomal RNA small subunit methyltransferase H from Sorangium cellulosum (strain So ce56) (Polyangium cellulosum (strain So ce56)).